The chain runs to 123 residues: Small ribosomal subunit protein uS12 (123 aa).

3-methylthioaspartic acid is present on aspartate 89. A disordered region spans residues 104–123 (SVGVKDRKKSRSKYGAKRPK). Positions 109 to 123 (DRKKSRSKYGAKRPK) are enriched in basic residues.

The protein belongs to the universal ribosomal protein uS12 family. Part of the 30S ribosomal subunit. Contacts proteins S8 and S17. May interact with IF1 in the 30S initiation complex.

In terms of biological role, with S4 and S5 plays an important role in translational accuracy. Functionally, interacts with and stabilizes bases of the 16S rRNA that are involved in tRNA selection in the A site and with the mRNA backbone. Located at the interface of the 30S and 50S subunits, it traverses the body of the 30S subunit contacting proteins on the other side and probably holding the rRNA structure together. The combined cluster of proteins S8, S12 and S17 appears to hold together the shoulder and platform of the 30S subunit. This chain is Small ribosomal subunit protein uS12, found in Pelobacter propionicus (strain DSM 2379 / NBRC 103807 / OttBd1).